Here is a 225-residue protein sequence, read N- to C-terminus: 7-cyano-7-deazaguanine synthase (225 aa).

8-18 provides a ligand contact to ATP; sequence VSGGADSATVL. Cysteine 188, cysteine 198, cysteine 201, and cysteine 204 together coordinate Zn(2+).

The protein belongs to the QueC family. It depends on Zn(2+) as a cofactor.

It carries out the reaction 7-carboxy-7-deazaguanine + NH4(+) + ATP = 7-cyano-7-deazaguanine + ADP + phosphate + H2O + H(+). Its pathway is purine metabolism; 7-cyano-7-deazaguanine biosynthesis. Functionally, catalyzes the ATP-dependent conversion of 7-carboxy-7-deazaguanine (CDG) to 7-cyano-7-deazaguanine (preQ(0)). The sequence is that of 7-cyano-7-deazaguanine synthase from Rickettsia bellii (strain OSU 85-389).